The chain runs to 478 residues: Dihydrolipoyl dehydrogenase (478 aa).

Residues 34–49 (EKYI…GGTC), Lys-58, and Gly-122 each bind FAD. A disulfide bridge connects residues Cys-49 and Cys-54. Residues 188-192 (GAGVI), Glu-211, Val-245, and 276-279 (AVGR) each bind NAD(+). Residues Asp-319 and Ala-327 each coordinate FAD. His-451 acts as the Proton acceptor in catalysis.

The protein belongs to the class-I pyridine nucleotide-disulfide oxidoreductase family. As to quaternary structure, homodimer. It depends on FAD as a cofactor.

It localises to the cytoplasm. It carries out the reaction N(6)-[(R)-dihydrolipoyl]-L-lysyl-[protein] + NAD(+) = N(6)-[(R)-lipoyl]-L-lysyl-[protein] + NADH + H(+). The branched-chain alpha-keto dehydrogenase complex catalyzes the overall conversion of alpha-keto acids to acyl-CoA and CO(2). It contains multiple copies of 3 enzymatic components: branched-chain alpha-keto acid decarboxylase (E1), lipoamide acyltransferase (E2) and lipoamide dehydrogenase (E3). Its function is as follows. Also acts in the glycine cleavage system. The protein is Dihydrolipoyl dehydrogenase (lpdG) of Pseudomonas aeruginosa (strain ATCC 15692 / DSM 22644 / CIP 104116 / JCM 14847 / LMG 12228 / 1C / PRS 101 / PAO1).